The sequence spans 670 residues: DNA ligase (670 aa).

Residues 33–37 (DAEFD), 82–83 (SL), and Glu113 contribute to the NAD(+) site. The active-site N6-AMP-lysine intermediate is Lys115. The NAD(+) site is built by Arg136, Glu170, Lys285, and Lys309. Zn(2+) is bound by residues Cys403, Cys406, Cys421, and Cys427. In terms of domain architecture, BRCT spans 587 to 670 (EQNLYLSGKT…EVLKAGDNNG (84 aa)).

The protein belongs to the NAD-dependent DNA ligase family. LigA subfamily. It depends on Mg(2+) as a cofactor. Requires Mn(2+) as cofactor.

It carries out the reaction NAD(+) + (deoxyribonucleotide)n-3'-hydroxyl + 5'-phospho-(deoxyribonucleotide)m = (deoxyribonucleotide)n+m + AMP + beta-nicotinamide D-nucleotide.. In terms of biological role, DNA ligase that catalyzes the formation of phosphodiester linkages between 5'-phosphoryl and 3'-hydroxyl groups in double-stranded DNA using NAD as a coenzyme and as the energy source for the reaction. It is essential for DNA replication and repair of damaged DNA. The protein is DNA ligase of Halothermothrix orenii (strain H 168 / OCM 544 / DSM 9562).